The following is a 355-amino-acid chain: MKIDPNKEKALAAVLGQIEKQFGKGSIMKLGEDRSMDVETISTGSLSLDVALGAGGLPMGRIVEIYGPESSGKTTLTLEVIAAAQREGKVCAFIDAEHALDPVYARKLGVDIDNLLCSQPDTGEQALEICDALTRSGAVDVIIVDSVAALVPKAEIEGEIGDSHVGLAARMMSQAMRKLAGNLKQSNTLLIFINQIRMKIGVMFGNPETTTGGNALKFYASVRLDIRRTGAIKEGDEVVGNETRVKVVKNKIAAPFRQADFQILYGQGINRTGELVDLGVLHKLIEKSGAWYSYKGDKIGQGRANATKFLAENTEIAAEIEKTLREMLLSHSSSSGSADEVEGDENIDFETGEVF.

67–74 (GPESSGKT) is an ATP binding site.

It belongs to the RecA family.

Its subcellular location is the cytoplasm. Its function is as follows. Can catalyze the hydrolysis of ATP in the presence of single-stranded DNA, the ATP-dependent uptake of single-stranded DNA by duplex DNA, and the ATP-dependent hybridization of homologous single-stranded DNAs. It interacts with LexA causing its activation and leading to its autocatalytic cleavage. The chain is Protein RecA from Shewanella amazonensis (strain ATCC BAA-1098 / SB2B).